Here is an 810-residue protein sequence, read N- to C-terminus: MRISLNWLRELVEIKLSPEELAHILTMAGFEVEDIEDRRTWANGVVVGRVLERQPHPNADKLSVCQVDVGATETLNIVCGAPNVRADIYVPVATVGAYLPNIDLKIKPAKLRGVPSQGMICSLKELGLPSEVDGIYIFPQENLPLGSDVRPLLGLDDVILDVTATANRADALSMVGIAREVAALTDAKLSIPKPGEAFVSESVGKLGLKIADTQACPAYIGTVIEQVKIASSPEWLQQRLRSAGVRPISNVVDITNYVLLEWGQPLHAFDQERLKSVANADNLTIGVRCANQGETLKTLDGQTRNLTTQNLLITANDQPVALAGVMGGEETEVHEGTQSLILEAALFDSVAIRRSSRSVGLRSEASGRYERGVNRAELEIANRRALSLISELADGVIVHQEIADTRPDPTTWSRSIFLRLDRVNEVLGPINVGETGELEAKDVERTLTALGCELTPAGEGTWNVSVPPYRYRDLEREIDLIEEVARLYGYDNFCDTLPDKAEAGYLPVDQELVRKLRAALRAEGLTELIHYSLVKPGEDRQIVLSNPLFVEYSALRTDLLAGLIDAFQYNLEQGNGSLNGFEIGRIFWQEEDGLQEKDAIAGIIGGDTSLGKWSKGSKDQPLTWFEAKGILESVFQQLGILVEYQPDCRDERLHPGRTASLWIGGNRLGIFGQLHPQLRRDKDLPESVYVFQLDLDVLLDALDKDEILVPAFKPYSTYPASDRDIAFFAPVKISVSEIEKAINKAGKGLLESVELFDEYRGENVPQGQRSLAFRLVYRASDRTLTDTEVEPVHNKVREALVEKFGVNLRS.

In terms of domain architecture, tRNA-binding spans 39 to 150; the sequence is RTWANGVVVG…ENLPLGSDVR (112 aa). Positions 411-495 constitute a B5 domain; sequence TWSRSIFLRL…RLYGYDNFCD (85 aa). The Mg(2+) site is built by Asp-473, Asp-479, Glu-482, and Glu-483. In terms of domain architecture, FDX-ACB spans 716 to 809; that stretch reads STYPASDRDI…LVEKFGVNLR (94 aa).

Belongs to the phenylalanyl-tRNA synthetase beta subunit family. Type 1 subfamily. In terms of assembly, tetramer of two alpha and two beta subunits. It depends on Mg(2+) as a cofactor.

It localises to the cytoplasm. It carries out the reaction tRNA(Phe) + L-phenylalanine + ATP = L-phenylalanyl-tRNA(Phe) + AMP + diphosphate + H(+). This is Phenylalanine--tRNA ligase beta subunit from Trichormus variabilis (strain ATCC 29413 / PCC 7937) (Anabaena variabilis).